The chain runs to 248 residues: 2,3-bisphosphoglycerate-dependent phosphoglycerate mutase (248 aa).

Residues 8-15 (RHGESTWN), 21-22 (TG), Arg60, 87-90 (ERHY), Lys98, 114-115 (RR), and 183-184 (GN) contribute to the substrate site. His9 serves as the catalytic Tele-phosphohistidine intermediate. Glu87 functions as the Proton donor/acceptor in the catalytic mechanism.

Belongs to the phosphoglycerate mutase family. BPG-dependent PGAM subfamily.

The catalysed reaction is (2R)-2-phosphoglycerate = (2R)-3-phosphoglycerate. It functions in the pathway carbohydrate degradation; glycolysis; pyruvate from D-glyceraldehyde 3-phosphate: step 3/5. In terms of biological role, catalyzes the interconversion of 2-phosphoglycerate and 3-phosphoglycerate. The polypeptide is 2,3-bisphosphoglycerate-dependent phosphoglycerate mutase (Solibacter usitatus (strain Ellin6076)).